Consider the following 308-residue polypeptide: NADH-cytochrome b5 reductase 1 (308 aa).

Residues 29–49 traverse the membrane as a helical segment; it reads VASSPAFLVAAAAIVIAAAFY. The region spanning 64–167 is the FAD-binding FR-type domain; it reads SIWKEFPLQK…KGPKGNFKYT (104 aa). FAD-binding positions include 147–162 and 173–205; these read ASLKIGDTLRVKGPKG and HLGMIAGGTGLAPMIQIVRAILQNPPDRTNITL.

It belongs to the flavoprotein pyridine nucleotide cytochrome reductase family. Monomer. Component of the 2-(3-amino-3-carboxypropyl)histidine synthase complex composed of DPH1, DPH2, DPH3 and a NADH-dependent reductase, predominantly MCR1.1. FAD is required as a cofactor.

It localises to the mitochondrion outer membrane. It carries out the reaction 2 Fe(III)-[cytochrome b5] + NADH = 2 Fe(II)-[cytochrome b5] + NAD(+) + H(+). The enzyme catalyses 2 Fe(3+)-[Dph3] + NADH = 2 Fe(2+)-[Dph3] + NAD(+) + H(+). It participates in protein modification; peptidyl-diphthamide biosynthesis. NADH-dependent reductase for DPH3 and cytochrome b5. Required for the first step of diphthamide biosynthesis, a post-translational modification of histidine which occurs in elongation factor 2. DPH1 and DPH2 transfer a 3-amino-3-carboxypropyl (ACP) group from S-adenosyl-L-methionine (SAM) to a histidine residue, the reaction is assisted by a reduction system comprising DPH3 and a NADH-dependent reductase, predominantly MCR1.1. By reducing DPH3, also involved in the formation of the tRNA wobble base modification mcm5s 2U (5-methoxycarbonylmethyl-2-thiouridine), mediated by the elongator complex. The cytochrome b5/NADH cytochrome b5 reductase electron transfer system supports the catalytic activity of several sterol biosynthetic enzymes. This is NADH-cytochrome b5 reductase 1 (MCR1.1) from Laccaria bicolor (strain S238N-H82 / ATCC MYA-4686) (Bicoloured deceiver).